We begin with the raw amino-acid sequence, 360 residues long: Peptide chain release factor 1 (360 aa).

The residue at position 237 (Q237) is an N5-methylglutamine.

This sequence belongs to the prokaryotic/mitochondrial release factor family. In terms of processing, methylated by PrmC. Methylation increases the termination efficiency of RF1.

The protein resides in the cytoplasm. Peptide chain release factor 1 directs the termination of translation in response to the peptide chain termination codons UAG and UAA. This is Peptide chain release factor 1 from Pseudomonas syringae pv. tomato (strain ATCC BAA-871 / DC3000).